A 436-amino-acid polypeptide reads, in one-letter code: GTPase Der (436 aa).

2 EngA-type G domains span residues 4-167 (PTVA…PVEE) and 175-351 (IRFS…ESQN). Residues 10 to 17 (GRPNVGKS), 57 to 61 (DTGGI), 119 to 122 (NKVD), 181 to 188 (GRPNVGKS), 229 to 233 (DTAGM), and 294 to 297 (NKWD) each bind GTP. Residues 352–436 (KRIPSAVLND…PIHLIARKRK (85 aa)) form the KH-like domain.

It belongs to the TRAFAC class TrmE-Era-EngA-EngB-Septin-like GTPase superfamily. EngA (Der) GTPase family. In terms of assembly, associates with the 50S ribosomal subunit.

Functionally, GTPase that plays an essential role in the late steps of ribosome biogenesis. The chain is GTPase Der from Streptococcus pyogenes serotype M28 (strain MGAS6180).